The following is a 234-amino-acid chain: Large ribosomal subunit protein uL1 (234 aa).

Belongs to the universal ribosomal protein uL1 family. Part of the 50S ribosomal subunit.

Its function is as follows. Binds directly to 23S rRNA. The L1 stalk is quite mobile in the ribosome, and is involved in E site tRNA release. Functionally, protein L1 is also a translational repressor protein, it controls the translation of the L11 operon by binding to its mRNA. In Helicobacter hepaticus (strain ATCC 51449 / 3B1), this protein is Large ribosomal subunit protein uL1.